A 105-amino-acid chain; its full sequence is Small ribosomal subunit protein uS17 (105 aa).

It belongs to the universal ribosomal protein uS17 family. In terms of assembly, part of the 30S ribosomal subunit.

In terms of biological role, one of the primary rRNA binding proteins, it binds specifically to the 5'-end of 16S ribosomal RNA. In Thermus thermophilus (strain ATCC BAA-163 / DSM 7039 / HB27), this protein is Small ribosomal subunit protein uS17.